The chain runs to 238 residues: MSNSWFQFKQFTVQQDKTAMKVCTDSCVFGATVPVTTSTYTILDIGTGTGLLALMLAQRSNADIDAVELNKDAAQQATDNFFNSPWNERLHVHTCSIQDYFKFTTKQYDLIVCNPPFFSASLKTGNTSKDMALHQSHLLIDELIQVVSFMLKQSGDAYLLISIYEEVNFFQAANRVGLNVKRFQEMYDNETKLIRYVLHLRKDTEHMDHETQNFIIRSADKQYTAQFVEVLRAFYLNL.

The protein belongs to the methyltransferase superfamily. tRNA (adenine-N(6)-)-methyltransferase family.

The protein resides in the cytoplasm. It catalyses the reaction adenosine(37) in tRNA1(Val) + S-adenosyl-L-methionine = N(6)-methyladenosine(37) in tRNA1(Val) + S-adenosyl-L-homocysteine + H(+). In terms of biological role, specifically methylates the adenine in position 37 of tRNA(1)(Val) (anticodon cmo5UAC). The protein is tRNA1(Val) (adenine(37)-N6)-methyltransferase of Cytophaga hutchinsonii (strain ATCC 33406 / DSM 1761 / CIP 103989 / NBRC 15051 / NCIMB 9469 / D465).